A 28-amino-acid polypeptide reads, in one-letter code: Ranatuerin-2BYb (28 aa).

Cys23 and Cys28 are disulfide-bonded.

As to expression, expressed by the skin glands.

The protein resides in the secreted. Functionally, antibacterial activity against Gram-negative bacterium E.coli. Very weak hemolysis activity. The sequence is that of Ranatuerin-2BYb from Rana boylii (Foothill yellow-legged frog).